Consider the following 374-residue polypeptide: Biotin synthase (374 aa).

Residues 49 to 276 form the Radical SAM core domain; sequence NEVQVSTLLS…KSHVRLSAGR (228 aa). [4Fe-4S] cluster-binding residues include C64, C68, and C71. [2Fe-2S] cluster contacts are provided by C108, C139, C199, and R271. The tract at residues 344-374 is disordered; sequence QQQEQAEGSNDLFIDATKPKVAAKQQHATEA.

Belongs to the radical SAM superfamily. Biotin synthase family. Homodimer. Requires [4Fe-4S] cluster as cofactor. The cofactor is [2Fe-2S] cluster.

The catalysed reaction is (4R,5S)-dethiobiotin + (sulfur carrier)-SH + 2 reduced [2Fe-2S]-[ferredoxin] + 2 S-adenosyl-L-methionine = (sulfur carrier)-H + biotin + 2 5'-deoxyadenosine + 2 L-methionine + 2 oxidized [2Fe-2S]-[ferredoxin]. It functions in the pathway cofactor biosynthesis; biotin biosynthesis; biotin from 7,8-diaminononanoate: step 2/2. Its function is as follows. Catalyzes the conversion of dethiobiotin (DTB) to biotin by the insertion of a sulfur atom into dethiobiotin via a radical-based mechanism. The sequence is that of Biotin synthase from Alteromonas mediterranea (strain DSM 17117 / CIP 110805 / LMG 28347 / Deep ecotype).